We begin with the raw amino-acid sequence, 224 residues long: uncharacterized protein (224 aa).

The protein to M.tuberculosis Rv2558.

This is an uncharacterized protein from Mycobacterium tuberculosis (strain CDC 1551 / Oshkosh).